The chain runs to 251 residues: Coproheme decarboxylase (251 aa).

Fe-coproporphyrin III is bound by residues Arg-133, 147–151 (YPMSK), His-174, Gln-187, and Ser-225. Residue Tyr-147 is part of the active site.

Belongs to the ChdC family. Type 1 subfamily. It depends on Fe-coproporphyrin III as a cofactor.

It catalyses the reaction Fe-coproporphyrin III + 2 H2O2 + 2 H(+) = heme b + 2 CO2 + 4 H2O. The catalysed reaction is Fe-coproporphyrin III + H2O2 + H(+) = harderoheme III + CO2 + 2 H2O. It carries out the reaction harderoheme III + H2O2 + H(+) = heme b + CO2 + 2 H2O. It participates in porphyrin-containing compound metabolism; protoheme biosynthesis. Functionally, involved in coproporphyrin-dependent heme b biosynthesis. Catalyzes the decarboxylation of Fe-coproporphyrin III (coproheme) to heme b (protoheme IX), the last step of the pathway. The reaction occurs in a stepwise manner with a three-propionate intermediate. The protein is Coproheme decarboxylase of Listeria monocytogenes serotype 4a (strain HCC23).